A 521-amino-acid chain; its full sequence is GMP synthase [glutamine-hydrolyzing] (521 aa).

Positions Lys8 to Leu203 constitute a Glutamine amidotransferase type-1 domain. Cys85 functions as the Nucleophile in the catalytic mechanism. Active-site residues include His177 and Glu179. Residues Trp204–Arg396 enclose the GMPS ATP-PPase domain. Residue Ser231 to Ser237 participates in ATP binding.

Homodimer.

It carries out the reaction XMP + L-glutamine + ATP + H2O = GMP + L-glutamate + AMP + diphosphate + 2 H(+). The protein operates within purine metabolism; GMP biosynthesis; GMP from XMP (L-Gln route): step 1/1. Catalyzes the synthesis of GMP from XMP. This is GMP synthase [glutamine-hydrolyzing] from Xanthomonas campestris pv. campestris (strain B100).